A 270-amino-acid polypeptide reads, in one-letter code: MLTPSSIADCWHSLRQQRPLVHVVPNLVTANDLANALLAVGAAPIMAIEPAEFSQLPNRALVLSMGTPTIDRMQLLAQAGRAAQAKNLPIVLDPVGVGATVWRKQAALALIATVQPTILRLNLGEALALLDQTGVAHGVDVGHAWHDPRLVAGQLARRYGCVVGLTGVIDVVSDGMNWIQLEHGHQWLSQITGAGCIVTSLIGALAAVINDVMLATVSAIAGFGMAAEVAAMHALGPASFRVALFDQLGAIAELIDNSRLSYRMEQHDAD.

Residue Met-46 coordinates substrate. 2 residues coordinate ATP: Arg-120 and Thr-166. Gly-193 lines the substrate pocket.

Belongs to the Thz kinase family. Requires Mg(2+) as cofactor.

It catalyses the reaction 5-(2-hydroxyethyl)-4-methylthiazole + ATP = 4-methyl-5-(2-phosphooxyethyl)-thiazole + ADP + H(+). It participates in cofactor biosynthesis; thiamine diphosphate biosynthesis; 4-methyl-5-(2-phosphoethyl)-thiazole from 5-(2-hydroxyethyl)-4-methylthiazole: step 1/1. Its function is as follows. Catalyzes the phosphorylation of the hydroxyl group of 4-methyl-5-beta-hydroxyethylthiazole (THZ). This Herpetosiphon aurantiacus (strain ATCC 23779 / DSM 785 / 114-95) protein is Hydroxyethylthiazole kinase.